Here is a 314-residue protein sequence, read N- to C-terminus: MTQTLPAGLTATATVAASSANLGPGFDSLGLALSLYDEIVVETVDSGLTVTVEGEGAGQVALDSSHLVVRAIEAGLRATGCIAPGLVVRCRNDIPHSRGLGSSAAAVVGGLAAANGLVSQTDWTPLTVEQLIQLSSAFEGHPDNAAAAVLGGAVVTWTDGAGAQARYAAAPLRVHPDIHLFPAIPQQRSSTAETRVLLPDTVSHTDARFNLSRAALLVVALTERPDLLMAATEDVLHQPQRAAAMPASAEFLRVLRGCGVAAVLSGAGPAVIALSTEPVLPAEAVEFGIANGFTIAEMAVGDGVRWSTGVAAGR.

95–105 (PHSRGLGSSAA) lines the ATP pocket.

The protein belongs to the GHMP kinase family. Homoserine kinase subfamily.

Its subcellular location is the cytoplasm. It carries out the reaction L-homoserine + ATP = O-phospho-L-homoserine + ADP + H(+). The protein operates within amino-acid biosynthesis; L-threonine biosynthesis; L-threonine from L-aspartate: step 4/5. Catalyzes the ATP-dependent phosphorylation of L-homoserine to L-homoserine phosphate. The sequence is that of Homoserine kinase from Mycobacterium sp. (strain KMS).